Consider the following 460-residue polypeptide: ATP synthase subunit beta (460 aa).

148–155 is a binding site for ATP; sequence GGAGVGKT.

The protein belongs to the ATPase alpha/beta chains family. In terms of assembly, F-type ATPases have 2 components, CF(1) - the catalytic core - and CF(0) - the membrane proton channel. CF(1) has five subunits: alpha(3), beta(3), gamma(1), delta(1), epsilon(1). CF(0) has three main subunits: a(1), b(2) and c(9-12). The alpha and beta chains form an alternating ring which encloses part of the gamma chain. CF(1) is attached to CF(0) by a central stalk formed by the gamma and epsilon chains, while a peripheral stalk is formed by the delta and b chains.

It is found in the cell inner membrane. It carries out the reaction ATP + H2O + 4 H(+)(in) = ADP + phosphate + 5 H(+)(out). Produces ATP from ADP in the presence of a proton gradient across the membrane. The catalytic sites are hosted primarily by the beta subunits. This Alcanivorax borkumensis (strain ATCC 700651 / DSM 11573 / NCIMB 13689 / SK2) protein is ATP synthase subunit beta.